The primary structure comprises 78 residues: Large ribosomal subunit protein uL29 (78 aa).

This sequence belongs to the universal ribosomal protein uL29 family.

This chain is Large ribosomal subunit protein uL29, found in Rhodococcus opacus (strain B4).